A 118-amino-acid chain; its full sequence is UPF0382 membrane protein C1782.12c (118 aa).

Positions 1–18 (MTIWNVAALTGLLSVGLG) are cleaved as a signal peptide. Over 19-40 (AYGSHGLQKRVQDPHLLKSWST) the chain is Lumenal. Residues 41-61 (ACTYLMFHSLATMAVSLHPVY) form a helical membrane-spanning segment. The Cytoplasmic portion of the chain corresponds to 62-67 (GKSRWT). The chain crosses the membrane as a helical span at residues 68 to 88 (GPLLITGSCLFSGTIYGLCLL). Residues 89–96 (PKGHSLRR) lie on the Lumenal side of the membrane. A helical transmembrane segment spans residues 97-117 (ILGPLTPIGGLVMLTGWATML). Residue V118 is a topological domain, cytoplasmic.

It belongs to the UPF0382 family.

The protein resides in the endoplasmic reticulum membrane. The polypeptide is UPF0382 membrane protein C1782.12c (Schizosaccharomyces pombe (strain 972 / ATCC 24843) (Fission yeast)).